Reading from the N-terminus, the 333-residue chain is Glycogenin-1 (333 aa).

N-acetylthreonine is present on threonine 2. Residues leucine 9, threonine 11, asparagine 12, and tyrosine 15 each coordinate UDP. Positions 9, 11, 12, and 15 each coordinate UDP-alpha-D-glucose. Serine 44 is modified (phosphoserine). Arginine 77 serves as a coordination point for UDP. UDP-alpha-D-glucose contacts are provided by arginine 77, lysine 86, aspartate 102, alanine 103, aspartate 104, asparagine 133, serine 134, aspartate 160, aspartate 163, and glutamine 164. Aspartate 102, alanine 103, and aspartate 104 together coordinate UDP. Position 102 (aspartate 102) interacts with Mn(2+). Aspartate 104 is a binding site for Mn(2+). Tyrosine 195 is a glycosylation site (O-linked (Glc...) tyrosine). 3 residues coordinate UDP: histidine 212, glycine 215, and lysine 218. Histidine 212 is a binding site for Mn(2+). Residues glycine 215 and lysine 218 each contribute to the UDP-alpha-D-glucose site. Residues 284–316 (SDLSFGEAPAAPQPSMSSEERKERWEQGQADYM) are interaction with GYS1. The tract at residues 290-316 (EAPAAPQPSMSSEERKERWEQGQADYM) is disordered.

It belongs to the glycosyltransferase 8 family. Glycogenin subfamily. Part of the GYS1-GYG1 complex, a heterooctamer composed of a tetramer of GYS1 and 2 dimers of GYG1, where each GYS1 protomer binds to one GYG1 subunit (via GYG1 C-terminus); the GYS1 tetramer may dissociate from GYG1 dimers to continue glycogen polymerization on its own. May also form a heterooctamer complex with GYS2. Mn(2+) serves as cofactor. Post-translationally, self-glycosylated by the transfer of glucose residues from UDP-glucose to itself, forming an alpha-1,4-glycan of around 10 residues attached to Tyr-195. Phosphorylated. In terms of tissue distribution, skeletal muscle, heart, to a lesser extent in kidney, lung and brain.

Its subcellular location is the cytoplasm. The protein localises to the nucleus. The enzyme catalyses L-tyrosyl-[glycogenin] + UDP-alpha-D-glucose = alpha-D-glucosyl-L-tyrosyl-[glycogenin] + UDP + H(+). The catalysed reaction is [1,4-alpha-D-glucosyl](n)-L-tyrosyl-[glycogenin] + UDP-alpha-D-glucose = [1,4-alpha-D-glucosyl](n+1)-L-tyrosyl-[glycogenin] + UDP + H(+). Its pathway is glycan biosynthesis; glycogen biosynthesis. In terms of biological role, glycogenin participates in the glycogen biosynthetic process along with glycogen synthase and glycogen branching enzyme. It catalyzes the formation of a short alpha (1,4)-glucosyl chain covalently attached via a glucose 1-O-tyrosyl linkage to internal tyrosine residues and these chains act as primers for the elongation reaction catalyzed by glycogen synthase. The protein is Glycogenin-1 of Mus musculus (Mouse).